The chain runs to 310 residues: tRNA pseudouridine synthase B (310 aa).

Aspartate 49 functions as the Nucleophile in the catalytic mechanism.

The protein belongs to the pseudouridine synthase TruB family. Type 1 subfamily.

It catalyses the reaction uridine(55) in tRNA = pseudouridine(55) in tRNA. Responsible for synthesis of pseudouridine from uracil-55 in the psi GC loop of transfer RNAs. The protein is tRNA pseudouridine synthase B of Sinorhizobium medicae (strain WSM419) (Ensifer medicae).